The chain runs to 101 residues: Protein Tat (101 aa).

Positions 1-24 (MEPVDPRLEPWKHPGSQPKTACTN) are interaction with human CREBBP. Residues 1–48 (MEPVDPRLEPWKHPGSQPKTACTNCYCKKCCFHCQVCFTKKALGISYG) are transactivation. Residues Cys22, Cys25, and Cys27 each coordinate Zn(2+). Positions 22 to 37 (CTNCYCKKCCFHCQVC) are cysteine-rich. The residue at position 28 (Lys28) is an N6-acetyllysine; by host PCAF. Cys30, His33, Cys34, and Cys37 together coordinate Zn(2+). The tract at residues 38-48 (FTKKALGISYG) is core. Residues 47–101 (YGRKKRRQRRRAHQDSQNHQASLSKQPSSQTRGDPTGPKEPKKEVEREAETDPLD) are disordered. Basic residues predominate over residues 48–58 (GRKKRRQRRRA). The short motif at 49-57 (RKKRRQRRR) is the Nuclear localization signal, RNA-binding (TAR), and protein transduction element. The interaction with the host capping enzyme RNGTT stretch occupies residues 49-86 (RKKRRQRRRAHQDSQNHQASLSKQPSSQTRGDPTGPKE). N6-acetyllysine; by host EP300 and GCN5L2 is present on residues Lys50 and Lys51. Asymmetric dimethylarginine; by host PRMT6 is present on residues Arg52 and Arg53. Positions 61–79 (DSQNHQASLSKQPSSQTRG) are enriched in polar residues. Lys71 is covalently cross-linked (Glycyl lysine isopeptide (Lys-Gly) (interchain with G-Cter in ubiquitin)). Positions 78 to 80 (RGD) match the Cell attachment site motif. Residues 83 to 101 (GPKEPKKEVEREAETDPLD) are compositionally biased toward basic and acidic residues.

The protein belongs to the lentiviruses Tat family. Interacts with host CCNT1. Associates with the P-TEFb complex composed at least of Tat, P-TEFb (CDK9 and CCNT1), TAR RNA, RNA Pol II. Recruits the HATs CREBBP, TAF1/TFIID, EP300, PCAF and GCN5L2. Interacts with host KAT5/Tip60; this interaction targets the latter to degradation. Interacts with the host deacetylase SIRT1. Interacts with host capping enzyme RNGTT; this interaction stimulates RNGTT. Binds to host KDR, and to the host integrins ITGAV/ITGB3 and ITGA5/ITGB1. Interacts with host KPNB1/importin beta-1 without previous binding to KPNA1/importin alpha-1. Interacts with EIF2AK2. Interacts with host nucleosome assembly protein NAP1L1; this interaction may be required for the transport of Tat within the nucleus, since the two proteins interact at the nuclear rim. Interacts with host C1QBP/SF2P32; this interaction involves lysine-acetylated Tat. Interacts with the host chemokine receptors CCR2, CCR3 and CXCR4. Interacts with host DPP4/CD26; this interaction may trigger an anti-proliferative effect. Interacts with host LDLR. Interacts with the host extracellular matrix metalloproteinase MMP1. Interacts with host PRMT6; this interaction mediates Tat's methylation. Interacts with, and is ubiquitinated by MDM2/Hdm2. Interacts with host PSMC3 and HTATIP2. Interacts with STAB1; this interaction may overcome SATB1-mediated repression of IL2 and IL2RA (interleukin) in T cells by binding to the same domain than HDAC1. Interacts (when acetylated) with human CDK13, thereby increasing HIV-1 mRNA splicing and promoting the production of the doubly spliced HIV-1 protein Nef. Interacts with host TBP; this interaction modulates the activity of transcriptional pre-initiation complex. Interacts with host RELA. Interacts with host PLSCR1; this interaction negatively regulates Tat transactivation activity by altering its subcellular distribution. In terms of processing, asymmetrical arginine methylation by host PRMT6 seems to diminish the transactivation capacity of Tat and affects the interaction with host CCNT1. Acetylation by EP300, CREBBP, GCN5L2/GCN5 and PCAF regulates the transactivation activity of Tat. EP300-mediated acetylation of Lys-50 promotes dissociation of Tat from the TAR RNA through the competitive binding to PCAF's bromodomain. In addition, the non-acetylated Tat's N-terminus can also interact with PCAF. PCAF-mediated acetylation of Lys-28 enhances Tat's binding to CCNT1. Lys-50 is deacetylated by SIRT1. Post-translationally, polyubiquitination by host MDM2 does not target Tat to degradation, but activates its transactivation function and fosters interaction with CCNT1 and TAR RNA. In terms of processing, phosphorylated by EIF2AK2 on serine and threonine residues adjacent to the basic region important for TAR RNA binding and function. Phosphorylation of Tat by EIF2AK2 is dependent on the prior activation of EIF2AK2 by dsRNA.

It is found in the host nucleus. Its subcellular location is the host nucleolus. It localises to the host cytoplasm. The protein localises to the secreted. Transcriptional activator that increases RNA Pol II processivity, thereby increasing the level of full-length viral transcripts. Recognizes a hairpin structure at the 5'-LTR of the nascent viral mRNAs referred to as the transactivation responsive RNA element (TAR) and recruits the cyclin T1-CDK9 complex (P-TEFb complex) that will in turn hyperphosphorylate the RNA polymerase II to allow efficient elongation. The CDK9 component of P-TEFb and other Tat-activated kinases hyperphosphorylate the C-terminus of RNA Pol II that becomes stabilized and much more processive. Other factors such as HTATSF1/Tat-SF1, SUPT5H/SPT5, and HTATIP2 are also important for Tat's function. Besides its effect on RNA Pol II processivity, Tat induces chromatin remodeling of proviral genes by recruiting the histone acetyltransferases (HATs) CREBBP, EP300 and PCAF to the chromatin. This also contributes to the increase in proviral transcription rate, especially when the provirus integrates in transcriptionally silent region of the host genome. To ensure maximal activation of the LTR, Tat mediates nuclear translocation of NF-kappa-B by interacting with host RELA. Through its interaction with host TBP, Tat may also modulate transcription initiation. Tat can reactivate a latently infected cell by penetrating in it and transactivating its LTR promoter. In the cytoplasm, Tat is thought to act as a translational activator of HIV-1 mRNAs. Its function is as follows. Extracellular circulating Tat can be endocytosed by surrounding uninfected cells via the binding to several surface receptors such as CD26, CXCR4, heparan sulfate proteoglycans (HSPG) or LDLR. Neurons are rarely infected, but they internalize Tat via their LDLR. Through its interaction with nuclear HATs, Tat is potentially able to control the acetylation-dependent cellular gene expression. Modulates the expression of many cellular genes involved in cell survival, proliferation or in coding for cytokines or cytokine receptors. Tat plays a role in T-cell and neurons apoptosis. Tat induced neurotoxicity and apoptosis probably contribute to neuroAIDS. Circulating Tat also acts as a chemokine-like and/or growth factor-like molecule that binds to specific receptors on the surface of the cells, affecting many cellular pathways. In the vascular system, Tat binds to ITGAV/ITGB3 and ITGA5/ITGB1 integrins dimers at the surface of endothelial cells and competes with bFGF for heparin-binding sites, leading to an excess of soluble bFGF. The sequence is that of Protein Tat from Homo sapiens (Human).